A 489-amino-acid chain; its full sequence is Probable cytosol aminopeptidase (489 aa).

Residues Lys255 and Asp260 each coordinate Mn(2+). Residue Lys267 is part of the active site. Residues Asp279, Asp339, and Glu341 each contribute to the Mn(2+) site. Residue Arg343 is part of the active site.

This sequence belongs to the peptidase M17 family. The cofactor is Mn(2+).

The protein localises to the cytoplasm. The catalysed reaction is Release of an N-terminal amino acid, Xaa-|-Yaa-, in which Xaa is preferably Leu, but may be other amino acids including Pro although not Arg or Lys, and Yaa may be Pro. Amino acid amides and methyl esters are also readily hydrolyzed, but rates on arylamides are exceedingly low.. It catalyses the reaction Release of an N-terminal amino acid, preferentially leucine, but not glutamic or aspartic acids.. Functionally, presumably involved in the processing and regular turnover of intracellular proteins. Catalyzes the removal of unsubstituted N-terminal amino acids from various peptides. This chain is Probable cytosol aminopeptidase, found in Synechococcus sp. (strain CC9605).